A 350-amino-acid polypeptide reads, in one-letter code: Dihydroorotate dehydrogenase (quinone) (350 aa).

FMN-binding positions include 65 to 69 (AGLDK) and T89. K69 is a substrate binding site. 114 to 118 (NRLGF) contacts substrate. FMN contacts are provided by N149 and N182. N182 is a substrate binding site. S185 acts as the Nucleophile in catalysis. N187 contributes to the substrate binding site. FMN is bound by residues K227 and T255. 256–257 (NT) contacts substrate. Residues G278, G307, and 328–329 (YT) contribute to the FMN site.

This sequence belongs to the dihydroorotate dehydrogenase family. Type 2 subfamily. In terms of assembly, monomer. The cofactor is FMN.

It localises to the cell membrane. The catalysed reaction is (S)-dihydroorotate + a quinone = orotate + a quinol. The protein operates within pyrimidine metabolism; UMP biosynthesis via de novo pathway; orotate from (S)-dihydroorotate (quinone route): step 1/1. Functionally, catalyzes the conversion of dihydroorotate to orotate with quinone as electron acceptor. The sequence is that of Dihydroorotate dehydrogenase (quinone) from Polaromonas naphthalenivorans (strain CJ2).